We begin with the raw amino-acid sequence, 297 residues long: Phosphoribosylaminoimidazole-succinocarboxamide synthase (297 aa).

Belongs to the SAICAR synthetase family.

It carries out the reaction 5-amino-1-(5-phospho-D-ribosyl)imidazole-4-carboxylate + L-aspartate + ATP = (2S)-2-[5-amino-1-(5-phospho-beta-D-ribosyl)imidazole-4-carboxamido]succinate + ADP + phosphate + 2 H(+). It functions in the pathway purine metabolism; IMP biosynthesis via de novo pathway; 5-amino-1-(5-phospho-D-ribosyl)imidazole-4-carboxamide from 5-amino-1-(5-phospho-D-ribosyl)imidazole-4-carboxylate: step 1/2. This chain is Phosphoribosylaminoimidazole-succinocarboxamide synthase, found in Mycobacterium sp. (strain KMS).